Reading from the N-terminus, the 379-residue chain is Ribosomal RNA large subunit methyltransferase G (379 aa).

This sequence belongs to the methyltransferase superfamily. RlmG family.

It is found in the cytoplasm. The enzyme catalyses guanosine(1835) in 23S rRNA + S-adenosyl-L-methionine = N(2)-methylguanosine(1835) in 23S rRNA + S-adenosyl-L-homocysteine + H(+). Specifically methylates the guanine in position 1835 (m2G1835) of 23S rRNA. This Pectobacterium atrosepticum (strain SCRI 1043 / ATCC BAA-672) (Erwinia carotovora subsp. atroseptica) protein is Ribosomal RNA large subunit methyltransferase G.